We begin with the raw amino-acid sequence, 359 residues long: Medium-wave-sensitive opsin 1 (359 aa).

Residues 1–47 (MAQQLTGEQTLDHYEDSTQASIFTYTNSNSTRGPFEGPNYHIAPRWV) are Extracellular-facing. Positions 12–38 (DHYEDSTQASIFTYTNSNSTRGPFEGP) are required for 11-cis-retinal regeneration. A glycan (N-linked (GlcNAc...) asparagine) is linked at Asn29. The chain crosses the membrane as a helical span at residues 48-72 (YHLTSTWMILVVIASVFTNGLVLAA). Topologically, residues 73–84 (TMRFKKLRHPLN) are cytoplasmic. A helical transmembrane segment spans residues 85-110 (WILVNLAVADLAETIIASTISVVNQI). Residues 111 to 124 (YGYFVLGHPLCVIE) lie on the Extracellular side of the membrane. Cys121 and Cys198 are joined by a disulfide. A helical membrane pass occupies residues 125 to 144 (GYIVSLCGITGLWSLAIISW). Over 145–163 (ERWLVVCKPFGNVRFDAKL) the chain is Cytoplasmic. The chain crosses the membrane as a helical span at residues 164 to 187 (ATVGIVFSWVWAAVWTAPPIFGWS). The Extracellular segment spans residues 188 to 213 (RYWPYGLKTSCGPDVFSGTSYPGVQS). Residues 214–241 (YMMVLMVTCCIFPLSIIVLCYLQVWLAI) traverse the membrane as a helical segment. The Cytoplasmic segment spans residues 242–263 (RAVAKQQKESESTQKAEKEVTR). The helical transmembrane segment at 264 to 287 (MVVVMVFAYCLCWGPYTFFACFAT) threads the bilayer. Topologically, residues 288–295 (AHPGYAFH) are extracellular. A helical membrane pass occupies residues 296–320 (PLVASLPSYFAKSATIYNPIIYVFM). Lys307 is modified (N6-(retinylidene)lysine). The Cytoplasmic portion of the chain corresponds to 321–359 (NRQFRNCILQLFGKKVDDSSELSSTSKTEVSSVSSVSPA).

The protein belongs to the G-protein coupled receptor 1 family. Opsin subfamily. In terms of assembly, monomer. Homodimer. Homotetramer. Post-translationally, O-glycosylated. Phosphorylated on some or all of the serine and threonine residues present in the C-terminal region. Expressed in cone photoreceptor cells.

The protein localises to the membrane. In terms of biological role, visual pigments are the light-absorbing molecules that mediate vision. They consist of an apoprotein, opsin, covalently linked to cis-retinal. May increase spectral sensitivity in dim light. The protein is Medium-wave-sensitive opsin 1 (Opn1mw) of Rattus norvegicus (Rat).